The sequence spans 261 residues: Undecaprenyl-diphosphatase 2 (261 aa).

Transmembrane regions (helical) follow at residues 1–21, 38–58, 75–95, 103–123, 138–158, 178–198, 212–232, and 240–260; these read MLEA…PISS, PGKT…CVVF, FAFA…GATL, LESP…ILVI, MSPA…VPGV, AAEF…AYSL, LIAL…KGFI, and FAPF…LILM.

Belongs to the UppP family.

It localises to the cell inner membrane. It carries out the reaction di-trans,octa-cis-undecaprenyl diphosphate + H2O = di-trans,octa-cis-undecaprenyl phosphate + phosphate + H(+). Catalyzes the dephosphorylation of undecaprenyl diphosphate (UPP). Confers resistance to bacitracin. The polypeptide is Undecaprenyl-diphosphatase 2 (Paramagnetospirillum magneticum (strain ATCC 700264 / AMB-1) (Magnetospirillum magneticum)).